Consider the following 594-residue polypeptide: Tripeptidyl-peptidase sed4 (594 aa).

An N-terminal signal peptide occupies residues 1 to 20 (MLSSTLYAGWLLSLAAPALC). The propeptide at 21–187 (VVQEKLSAVP…AVKLPALPRR (167 aa)) is removed in mature form. N-linked (GlcNAc...) asparagine glycosylation is found at asparagine 191, asparagine 229, and asparagine 250. In terms of domain architecture, Peptidase S53 spans 197–594 (LITPDCLVEM…MKLKELVLSL (398 aa)). Active-site charge relay system residues include glutamate 272, aspartate 276, and serine 494. Residues aspartate 536 and isoleucine 537 each contribute to the Ca(2+) site. Asparagine 568 carries N-linked (GlcNAc...) asparagine glycosylation. Ca(2+) is bound by residues glycine 572 and aspartate 574.

Requires Ca(2+) as cofactor. Post-translationally, N-glycosylated.

It is found in the secreted. The protein resides in the extracellular space. The enzyme catalyses Release of an N-terminal tripeptide from a polypeptide.. In terms of biological role, secreted tripeptidyl-peptidase which degrades proteins at acidic pHs and is involved in virulence. In Aspergillus fumigatus (strain ATCC MYA-4609 / CBS 101355 / FGSC A1100 / Af293) (Neosartorya fumigata), this protein is Tripeptidyl-peptidase sed4 (sed4).